The chain runs to 484 residues: Serine hydroxymethyltransferase, cytosolic (484 aa).

N-acetylalanine is present on Ala-2. At Asn-6 the chain carries Deamidated asparagine; alternate. Positions Asn-6–Gly-7 form a cross-link, isoaspartyl glycine isopeptide (Asn-Gly); alternate. Cys-204 (nucleophile) is an active-site residue. The active-site Proton donor is His-256. Lys-257 is subject to N6-(pyridoxal phosphate)lysine.

This sequence belongs to the SHMT family. As to quaternary structure, homotetramer. Identified in complex with ABRAXAS2 and the other subunits of the BRISC complex, at least composed of ABRAXAS2, BRCC3/BRCC36, BABAM2 and BABAM1/NBA1. It depends on pyridoxal 5'-phosphate as a cofactor. Deamidation of asparagine produces alternatively aspartate or isoaspartate, which in turn can be converted to aspartate through carboxylmethylation/demethylation.

Its subcellular location is the cytoplasm. It catalyses the reaction (6R)-5,10-methylene-5,6,7,8-tetrahydrofolate + glycine + H2O = (6S)-5,6,7,8-tetrahydrofolate + L-serine. The protein operates within one-carbon metabolism; tetrahydrofolate interconversion. Its function is as follows. Interconversion of serine and glycine. The polypeptide is Serine hydroxymethyltransferase, cytosolic (SHMT1) (Oryctolagus cuniculus (Rabbit)).